Here is a 570-residue protein sequence, read N- to C-terminus: Glutamate--tRNA ligase (570 aa).

The 'HIGH' region motif lies at 107–117 (PNPDFVLHLGS).

This sequence belongs to the class-I aminoacyl-tRNA synthetase family. Glutamate--tRNA ligase type 2 subfamily.

The protein localises to the cytoplasm. It catalyses the reaction tRNA(Glu) + L-glutamate + ATP = L-glutamyl-tRNA(Glu) + AMP + diphosphate. Its function is as follows. Catalyzes the attachment of glutamate to tRNA(Glu) in a two-step reaction: glutamate is first activated by ATP to form Glu-AMP and then transferred to the acceptor end of tRNA(Glu). The sequence is that of Glutamate--tRNA ligase from Pyrobaculum calidifontis (strain DSM 21063 / JCM 11548 / VA1).